Here is a 438-residue protein sequence, read N- to C-terminus: Transposon Ty2-B Gag polyprotein (438 aa).

Polar residues-rich tracts occupy residues 1 to 11, 19 to 39, and 49 to 60; these read MESQQLHQNPH, ASVT…SASN, and KVNSQQETTPGT. Disordered regions lie at residues 1 to 88, 364 to 397, and 419 to 438; these read MESQ…YQQH, KNVS…AKAH, and SSQY…TERI. Positions 295–397 are RNA-binding; sequence ENNINVSDRL…SSKPRAAKAH (103 aa). A compositionally biased stretch (low complexity) spans 369-381; that stretch reads TSPNTTNTKVTTR.

In terms of assembly, homotrimer.

The protein resides in the cytoplasm. Capsid protein (CA) is the structural component of the virus-like particle (VLP), forming the shell that encapsulates the retrotransposons dimeric RNA genome. The particles are assembled from trimer-clustered units and there are holes in the capsid shells that allow for the diffusion of macromolecules. CA also has nucleocapsid-like chaperone activity, promoting primer tRNA(i)-Met annealing to the multipartite primer-binding site (PBS), dimerization of Ty2 RNA and initiation of reverse transcription. The polypeptide is Transposon Ty2-B Gag polyprotein (TY2A-B) (Saccharomyces cerevisiae (strain ATCC 204508 / S288c) (Baker's yeast)).